Consider the following 236-residue polypeptide: Demethylmenaquinone methyltransferase (236 aa).

S-adenosyl-L-methionine-binding positions include threonine 62, aspartate 80, 107–108 (DA), and serine 124.

The protein belongs to the class I-like SAM-binding methyltransferase superfamily. MenG/UbiE family.

It carries out the reaction a 2-demethylmenaquinol + S-adenosyl-L-methionine = a menaquinol + S-adenosyl-L-homocysteine + H(+). It participates in quinol/quinone metabolism; menaquinone biosynthesis; menaquinol from 1,4-dihydroxy-2-naphthoate: step 2/2. In terms of biological role, methyltransferase required for the conversion of demethylmenaquinol (DMKH2) to menaquinol (MKH2). This chain is Demethylmenaquinone methyltransferase, found in Thermobifida fusca (strain YX).